Here is a 488-residue protein sequence, read N- to C-terminus: Calcium uniporter protein, mitochondrial (488 aa).

The N-terminal 74 residues, 1–74 (MRALVSRTPI…RSFQLSASSR (74 aa)), are a transit peptide targeting the mitochondrion. Positions 65–117 (RSFQLSASSRDKRGPQSAEPDPLERLEVKKVQQQHENEKDDSGRDTKSGGKVA) are disordered. At 75-339 (DKRGPQSAEP…ECDALAHRGA (265 aa)) the chain is on the mitochondrial matrix side. Positions 86-112 (PLERLEVKKVQQQHENEKDDSGRDTKS) are enriched in basic and acidic residues. The chain crosses the membrane as a helical span at residues 340–361 (QRVALGGFGILAFWWYIVYKLT). At 362 to 370 (FETDLGWDT) the chain is on the mitochondrial intermembrane side. The short motif at 368 to 376 (WDTMEPVTY) is the Selectivity filter element. Residues 371-391 (MEPVTYLVSLSTLMGGYLWFL) form a helical membrane-spanning segment. Glu372 serves as a coordination point for Ca(2+). Residues 392-488 (YHNREISYRS…ERPKDDRDDD (97 aa)) lie on the Mitochondrial matrix side of the membrane. Positions 464–488 (ALKKERRLKNGSQKEERPKDDRDDD) are disordered. Residues 475 to 488 (SQKEERPKDDRDDD) are compositionally biased toward basic and acidic residues.

Belongs to the MCU (TC 1.A.77) family. In terms of assembly, homotetramer, assembles in a dimer or dimers configuration with two interfaces.

Its subcellular location is the mitochondrion inner membrane. It carries out the reaction Ca(2+)(in) = Ca(2+)(out). Inhibited by ruthenium red or its derivative Ru360. In terms of biological role, highly selective calcium channel localized to the inner mitochondrial membrane, which mediates calcium uptake into the mitochondrial matrix. Mitochondrial calcium homeostasis plays key roles in cellular physiology and regulates ATP production, cytoplasmic calcium signals and activation of cell death pathways. Sufficient to operate as a pore-forming channel without the need of calcium-sensor or auxiliary subunit. This Neosartorya fischeri (strain ATCC 1020 / DSM 3700 / CBS 544.65 / FGSC A1164 / JCM 1740 / NRRL 181 / WB 181) (Aspergillus fischerianus) protein is Calcium uniporter protein, mitochondrial.